A 255-amino-acid chain; its full sequence is Pyrroloquinoline-quinone synthase (255 aa).

The protein belongs to the PqqC family.

It carries out the reaction 6-(2-amino-2-carboxyethyl)-7,8-dioxo-1,2,3,4,7,8-hexahydroquinoline-2,4-dicarboxylate + 3 O2 = pyrroloquinoline quinone + 2 H2O2 + 2 H2O + H(+). It participates in cofactor biosynthesis; pyrroloquinoline quinone biosynthesis. Ring cyclization and eight-electron oxidation of 3a-(2-amino-2-carboxyethyl)-4,5-dioxo-4,5,6,7,8,9-hexahydroquinoline-7,9-dicarboxylic-acid to PQQ. The polypeptide is Pyrroloquinoline-quinone synthase (Cereibacter sphaeroides (strain ATCC 17023 / DSM 158 / JCM 6121 / CCUG 31486 / LMG 2827 / NBRC 12203 / NCIMB 8253 / ATH 2.4.1.) (Rhodobacter sphaeroides)).